A 346-amino-acid polypeptide reads, in one-letter code: Histidinol-phosphate aminotransferase (346 aa).

The residue at position 209 (lysine 209) is an N6-(pyridoxal phosphate)lysine.

The protein belongs to the class-II pyridoxal-phosphate-dependent aminotransferase family. Histidinol-phosphate aminotransferase subfamily. In terms of assembly, homodimer. Requires pyridoxal 5'-phosphate as cofactor.

It carries out the reaction L-histidinol phosphate + 2-oxoglutarate = 3-(imidazol-4-yl)-2-oxopropyl phosphate + L-glutamate. Its pathway is amino-acid biosynthesis; L-histidine biosynthesis; L-histidine from 5-phospho-alpha-D-ribose 1-diphosphate: step 7/9. This chain is Histidinol-phosphate aminotransferase, found in Vibrio campbellii (strain ATCC BAA-1116).